The sequence spans 353 residues: Tsukushi (353 aa).

An N-terminal signal peptide occupies residues 1-16 (MPWPLLLLLAVSGAQT). The 42-residue stretch at 17 to 58 (TRPCFPGCQCEVETFGLFDSFSLTRVDCSGLGPHIMPVPIPL) folds into the LRRNT domain. LRR repeat units lie at residues 59-80 (DTAH…VLAG), 85-106 (TLAG…AFSR), 109-130 (YLES…SFTS), 132-153 (PLSD…AFTT), 159-179 (ALHV…PTRA), 185-206 (TIQS…RDLP), 207-227 (LRYL…AFAG), 230-249 (GLTH…APSG), 255-276 (GLQV…EVFS), and 280-301 (SLQE…LLLH). Asparagine 74 is a glycosylation site (N-linked (GlcNAc...) asparagine). An N-linked (GlcNAc...) asparagine glycan is attached at asparagine 137.

In terms of assembly, interacts with FZD4 (via FZ domain); competes with WNT2B for binding to FZD4, inhibiting Wnt signaling and repressing peripheral eye development. Interacts with TGFB1; the interaction contributes to regulation of the hair cycle. Interacts with netrin. Interacts with CCN2.

The protein localises to the secreted. In terms of biological role, contributes to various developmental events and other processes such as wound healing and cholesterol homeostasis through its interactions with multiple signaling pathways. Wnt signaling inhibitor which competes with WNT2B for binding to Wnt receptor FZD4 and represses WNT2B-dependent development of the peripheral eye. Plays a role in regulating the hair cycle by controlling TGFB1 signaling. Required for the development of the anterior commissure in the brain by inhibiting neurite outgrowth. Essential for terminal differentiation of hippocampal neural stem cells. Plays a role in regulating bone elongation and bone mass by modulating growth plate chondrocyte function and overall body size. Required for development of the inner ear through its involvement in stereocilia formation in inner hair cells. Facilitates wound healing by inhibiting secretion of TGFB1 from macrophages which prevents myofibroblast differentiation, maintaining inflammatory cell quiescence. Plays a role in cholesterol homeostasis by reducing circulating high-density lipoprotein cholesterol, lowering cholesterol efflux capacity and decreasing cholesterol-to-bile acid conversion in the liver. In one study, shown to negatively regulate sympathetic innervation in brown fat, leading to reduced energy expenditure. In another study, shown not to affect brown fat thermogenic capacity, body weight gain or glucose homeostasis. The sequence is that of Tsukushi (TSKU) from Homo sapiens (Human).